A 489-amino-acid chain; its full sequence is NF-kappa-B inhibitor cactus (489 aa).

Positions 1–26 (MPSPTKAAEAATKATATSDCSCSAAS) are enriched in low complexity. 2 disordered regions span residues 1–138 (MPSP…SMRL) and 163–203 (NNLG…APPS). Position 45 is a phosphoserine; by PKC (Ser45). Residues 69 to 86 (NETSDSGFISGPQSSQIC) are compositionally biased toward polar residues. Ser135 is subject to Phosphoserine; by PKC. Residues 163-180 (NNLGQSSSTQITGRSKFQ) show a composition bias toward polar residues. Position 174 is a phosphothreonine; by PKC (Thr174). The span at 181-203 (SSTASTANANPSGXGATSSAPPS) shows a compositional bias: low complexity. 5 ANK repeats span residues 220–252 (DGDTPXHLACISGSVEVVAALIRMAPHPCLLNI), 256–285 (VAQTPLHLAALTAQPNIMRILLLAGAEVRD), 287–316 (HGNTALHLSCIAGEKQCVRALTEEFGATEI), 350–379 (DGERCVHLAAEAGHIDILRILVSHGADINA), and 384–413 (SGRTPLHIAIEGCNEDLANFLLDECEKLNL). A Phosphothreonine; by PKC modification is found at Thr308. At Ser384 the chain carries Phosphoserine; by PKC.

It is found in the cytoplasm. In terms of biological role, involved in the formation of the dorsoventral pattern. It inhibits nuclear translocation of the dorsal morphogen in the dorsal region of the embryo. The sequence is that of NF-kappa-B inhibitor cactus (cact) from Drosophila yakuba (Fruit fly).